The chain runs to 591 residues: Calnexin (591 aa).

An N-terminal signal peptide occupies residues 1 to 20 (MEGKWLLCLLLVLGTAAVEA). The Lumenal segment spans residues 21–482 (HDGHDDDAID…QMLEAAEERP (462 aa)). Positions 75 and 118 each coordinate Ca(2+). K138 bears the N6-acetyllysine mark. An intrachain disulfide couples C161 to C195. An alpha-D-glucoside-binding residues include Y165, K167, Y186, and D193. The segment at 261–347 (GNLLNDMTPP…EKPEDWDEDM (87 aa)) is disordered. Positions 275 to 320 (REIEDPEDRKPEDWDERPKIADPDAVKPDDWDEDAPSKIPDEEATK) are enriched in basic and acidic residues. Positions 277-410 (IEDPEDRKPE…RKIPNPDFFE (134 aa)) are p domain (Extended arm). 5 repeat units span residues 279–291 (DPED…WDER), 296–308 (DPDA…WDED), 315–327 (DEEA…WLDD), 334–346 (DPDA…WDED), and 349–359 (GEWEAPQIANP). 4 X approximate repeats stretches follow at residues 279–346 (DPED…WDED) and 349–406 (GEWE…IPNP). A compositionally biased stretch (acidic residues) spans 324-347 (WLDDEPEYIPDPDAEKPEDWDEDM). An interaction with PPIB region spans residues 327–360 (DEPEYIPDPDAEKPEDWDEDMDGEWEAPQIANPK). Residues C361 and C367 are joined by a disulfide bond. 3 consecutive repeat copies span residues 368 to 378 (GVWQRPMIDNP), 382 to 392 (GKWKPPMIDNP), and 396 to 406 (GIWKPRKIPNP). E426 contributes to the an alpha-D-glucoside binding site. A Ca(2+)-binding site is contributed by D437. The chain crosses the membrane as a helical span at residues 483–503 (WLWVVYILTVALPVFLVILFC). S-palmitoyl cysteine attachment occurs at residues C503 and C504. The Cytoplasmic portion of the chain corresponds to 504–591 (CSGKKQSNAM…SPRNRKPRRE (88 aa)). The segment at 504–591 (CSGKKQSNAM…SPRNRKPRRE (88 aa)) is sufficient to mediate interaction with SGIP1. Residues 514-539 (EYKKTDAPQPDVKDEEGKEEEKNKRD) show a composition bias toward basic and acidic residues. The segment at 514–591 (EYKKTDAPQP…SPRNRKPRRE (78 aa)) is disordered. A Phosphoserine modification is found at S553. The span at 555–568 (AEEDGVTGSQDEED) shows a compositional bias: acidic residues. At T561 the chain carries Phosphothreonine. The residue at position 563 (S563) is a Phosphoserine; by MAPK3. Residue S582 is modified to Phosphoserine.

It belongs to the calreticulin family. In terms of assembly, interacts with MAPK3/ERK1. Interacts with KCNH2. Associates with ribosomes. The palmitoylated form interacts with the ribosome-translocon complex component SSR1, promoting efficient folding of glycoproteins. Interacts with SERPINA2P/SERPINA2 and with the S and Z variants of SERPINA1. Interacts with SGIP1; involved in negative regulation of endocytosis. Interacts with PPIB. Interacts with SMIM22. Interacts with TMX2. Interacts with TMEM35A/NACHO. Interacts with CHRNA7. Interacts with reticulophagy regulators RETREG2 and RETREG3. Interacts with DNM1L; may form part of a larger protein complex at the ER-mitochondrial interface during mitochondrial fission. Interacts with ADAM7. Phosphorylated at Ser-563 by MAPK3/ERK1. Phosphorylation by MAPK3/ERK1 increases its association with ribosomes. Post-translationally, palmitoylation by DHHC6 leads to the preferential localization to the perinuclear rough ER. It mediates the association of calnexin with the ribosome-translocon complex (RTC) which is required for efficient folding of glycosylated proteins. In terms of processing, ubiquitinated, leading to proteasomal degradation. Probably ubiquitinated by ZNRF4. Expressed in sperm (at protein level).

It is found in the endoplasmic reticulum membrane. It localises to the mitochondrion membrane. Its subcellular location is the melanosome membrane. In terms of biological role, calcium-binding protein that interacts with newly synthesized monoglucosylated glycoproteins in the endoplasmic reticulum. It may act in assisting protein assembly and/or in the retention within the ER of unassembled protein subunits. It seems to play a major role in the quality control apparatus of the ER by the retention of incorrectly folded proteins. Associated with partial T-cell antigen receptor complexes that escape the ER of immature thymocytes, it may function as a signaling complex regulating thymocyte maturation. Additionally it may play a role in receptor-mediated endocytosis at the synapse. In Mus musculus (Mouse), this protein is Calnexin (Canx).